The following is an 838-amino-acid chain: Alpha-glucan phosphorylase, H isozyme (838 aa).

Positions 1-21 (MEGGAKSNDVSAAPIAQPLSE) are disordered. Lys684 bears the N6-(pyridoxal phosphate)lysine mark.

This sequence belongs to the glycogen phosphorylase family. The cofactor is pyridoxal 5'-phosphate.

The protein localises to the cytoplasm. The enzyme catalyses [(1-&gt;4)-alpha-D-glucosyl](n) + phosphate = [(1-&gt;4)-alpha-D-glucosyl](n-1) + alpha-D-glucose 1-phosphate. Phosphorylase is an important allosteric enzyme in carbohydrate metabolism. Enzymes from different sources differ in their regulatory mechanisms and in their natural substrates. However, all known phosphorylases share catalytic and structural properties. The polypeptide is Alpha-glucan phosphorylase, H isozyme (Solanum tuberosum (Potato)).